The following is a 448-amino-acid chain: MHDNLPQIWEKAINLIKTELTEVSFNTWVKPIQAISLDNETLVLGVPNDFTQGILNARYNTLISNAVKQVTSKNYEVHIVVPSEERVGDTQNINARRSNAQSPIMGNSPLILNPKYTFDTFVIGNSNRFAHAASVAVAESPAKAYNPLFIYGGVGLGKTHLMNAIGHYILANNPKAKVVYVSSETFTNELINSIRDDRNVEFRNRYRNVDVLLVDDIQFIAGKERTQEEFFHTFNALHESNKQIIISSDRPPKEIPTLEERLRSRFEWGLITDIQPPDLETRIAILRKKAQMENIYVPDEVTAHIAKKIQSNIRELEGALIRIVAYSSLTNSEVTVELASEALKEIFTSKPRLLNVPLIKEVVSNHFSIKLEDFDSKKRTRSISYPRQVAMYLTRELTDLSLPKIGDEFGGRDHTTVMHAHSKIVNEINSDSDLKNKLDAIIKELKSD.

Residues 1-85 are domain I, interacts with DnaA modulators; the sequence is MHDNLPQIWE…EVHIVVPSEE (85 aa). Positions 85-110 are domain II; sequence ERVGDTQNINARRSNAQSPIMGNSPL. Residues 111-327 are domain III, AAA+ region; sequence ILNPKYTFDT…GALIRIVAYS (217 aa). Residues G155, G157, K158, and T159 each coordinate ATP. The tract at residues 328–448 is domain IV, binds dsDNA; sequence SLTNSEVTVE…DAIIKELKSD (121 aa).

The protein belongs to the DnaA family. Oligomerizes as a right-handed, spiral filament on DNA at oriC.

The protein resides in the cytoplasm. Functionally, plays an essential role in the initiation and regulation of chromosomal replication. ATP-DnaA binds to the origin of replication (oriC) to initiate formation of the DNA replication initiation complex once per cell cycle. Binds the DnaA box (a 9 base pair repeat at the origin) and separates the double-stranded (ds)DNA. Forms a right-handed helical filament on oriC DNA; dsDNA binds to the exterior of the filament while single-stranded (ss)DNA is stabiized in the filament's interior. The ATP-DnaA-oriC complex binds and stabilizes one strand of the AT-rich DNA unwinding element (DUE), permitting loading of DNA polymerase. After initiation quickly degrades to an ADP-DnaA complex that is not apt for DNA replication. Binds acidic phospholipids. The protein is Chromosomal replication initiator protein DnaA of Alkaliphilus metalliredigens (strain QYMF).